The primary structure comprises 232 residues: Enolase-phosphatase E1 (232 aa).

Belongs to the HAD-like hydrolase superfamily. MasA/MtnC family. Monomer. Mg(2+) serves as cofactor.

The catalysed reaction is 5-methylsulfanyl-2,3-dioxopentyl phosphate + H2O = 1,2-dihydroxy-5-(methylsulfanyl)pent-1-en-3-one + phosphate. Its pathway is amino-acid biosynthesis; L-methionine biosynthesis via salvage pathway; L-methionine from S-methyl-5-thio-alpha-D-ribose 1-phosphate: step 3/6. The protein operates within amino-acid biosynthesis; L-methionine biosynthesis via salvage pathway; L-methionine from S-methyl-5-thio-alpha-D-ribose 1-phosphate: step 4/6. In terms of biological role, bifunctional enzyme that catalyzes the enolization of 2,3-diketo-5-methylthiopentyl-1-phosphate (DK-MTP-1-P) into the intermediate 2-hydroxy-3-keto-5-methylthiopentenyl-1-phosphate (HK-MTPenyl-1-P), which is then dephosphorylated to form the acireductone 1,2-dihydroxy-3-keto-5-methylthiopentene (DHK-MTPene). This is Enolase-phosphatase E1 from Xylella fastidiosa (strain M12).